Reading from the N-terminus, the 255-residue chain is Putative glutamine amidotransferase YafJ (255 aa).

Cys-2 serves as the catalytic For GATase activity. A Glutamine amidotransferase type-2 domain is found at 2–251 (CELLGMSANV…PGEWRLFCLG (250 aa)).

The chain is Putative glutamine amidotransferase YafJ (yafJ) from Escherichia coli (strain K12).